The chain runs to 397 residues: MSKPFVPTPNISRPATPSSLDYGKDEASSTLLRDMGERGDRERKDREERDKKEAMPSGQDQVLPILSYCAASIMMTVVNKYVVSGANFTMTFLLLAIQSSVCVLAVTTVKKLGFISFRDFDKNDAKAWWPISTLLVAVIYTGSKALQFLSIPVYTIFKNLTIILIAYGEVFMFNGAVSGLTLCSFALMVGSSIIAAWSDITSVWNKEPELDPITGLEITVGPVSTIGGLNAGYIWMALNCFVSAAYVLFMRKRIKVTGFKDWDSMYYNNLLSIPILVVFSLVIEDWGSESLALNFPASNRVLLLSAMAFSGAAAVFISYSTAWCVRITGSTTYSMVGALNKLPVAASGILFFGDPANFGNISAIAVGGVAGVVYAVAKTNQAKVEKARQARAAGGRP.

The interval 1-57 (MSKPFVPTPNISRPATPSSLDYGKDEASSTLLRDMGERGDRERKDREERDKKEAMPS) is disordered. At 1–61 (MSKPFVPTPN…KEAMPSGQDQ (61 aa)) the chain is on the cytoplasmic side. Residues 9-19 (PNISRPATPSS) show a composition bias toward polar residues. Over residues 34 to 54 (DMGERGDRERKDREERDKKEA) the composition is skewed to basic and acidic residues. A helical membrane pass occupies residues 62–82 (VLPILSYCAASIMMTVVNKYV). At 83-87 (VSGAN) the chain is on the lumenal side. A glycan (N-linked (GlcNAc...) asparagine) is linked at Asn87. A helical transmembrane segment spans residues 88–108 (FTMTFLLLAIQSSVCVLAVTT). Residues 109–124 (VKKLGFISFRDFDKND) lie on the Cytoplasmic side of the membrane. A helical transmembrane segment spans residues 125–142 (AKAWWPISTLLVAVIYTG). Over 143–145 (SKA) the chain is Lumenal. The helical transmembrane segment at 146 to 168 (LQFLSIPVYTIFKNLTIILIAYG) threads the bilayer. The Cytoplasmic segment spans residues 169–174 (EVFMFN). A helical transmembrane segment spans residues 175-197 (GAVSGLTLCSFALMVGSSIIAAW). Over 198–228 (SDITSVWNKEPELDPITGLEITVGPVSTIGG) the chain is Lumenal. Residues 229–249 (LNAGYIWMALNCFVSAAYVLF) form a helical membrane-spanning segment. At 250–272 (MRKRIKVTGFKDWDSMYYNNLLS) the chain is on the cytoplasmic side. The helical transmembrane segment at 273–293 (IPILVVFSLVIEDWGSESLAL) threads the bilayer. The Lumenal segment spans residues 294 to 300 (NFPASNR). The chain crosses the membrane as a helical span at residues 301–321 (VLLLSAMAFSGAAAVFISYST). The Cytoplasmic portion of the chain corresponds to 322–332 (AWCVRITGSTT). A helical transmembrane segment spans residues 333 to 353 (YSMVGALNKLPVAASGILFFG). Residues 354 to 355 (DP) lie on the Lumenal side of the membrane. The chain crosses the membrane as a helical span at residues 356–376 (ANFGNISAIAVGGVAGVVYAV). Residues 377 to 397 (AKTNQAKVEKARQARAAGGRP) are Cytoplasmic-facing.

It belongs to the TPT transporter family. SLC35D subfamily. Homooligomer.

The protein localises to the golgi apparatus membrane. The protein resides in the cytoplasmic vesicle membrane. It localises to the endoplasmic reticulum membrane. Its function is as follows. Involved in the import of GDP-mannose from the cytoplasm into the Golgi lumen. Involved in capsule synthesis. This chain is GDP-mannose transporter 1 (GMT1), found in Cryptococcus neoformans var. neoformans serotype D (strain B-3501A) (Filobasidiella neoformans).